The following is a 219-amino-acid chain: Proteasome subunit beta (219 aa).

Residues 1–14 (MISNSEYHKEYMKG) constitute a propeptide, removed in mature form; by autocatalysis. Thr15 serves as the catalytic Nucleophile.

It belongs to the peptidase T1B family. As to quaternary structure, the 20S proteasome core is composed of 14 alpha and 14 beta subunits that assemble into four stacked heptameric rings, resulting in a barrel-shaped structure. The two inner rings, each composed of seven catalytic beta subunits, are sandwiched by two outer rings, each composed of seven alpha subunits. The catalytic chamber with the active sites is on the inside of the barrel. Has a gated structure, the ends of the cylinder being occluded by the N-termini of the alpha-subunits. Is capped at one or both ends by the proteasome regulatory ATPase, PAN.

The protein localises to the cytoplasm. It catalyses the reaction Cleavage of peptide bonds with very broad specificity.. The formation of the proteasomal ATPase PAN-20S proteasome complex, via the docking of the C-termini of PAN into the intersubunit pockets in the alpha-rings, triggers opening of the gate for substrate entry. Interconversion between the open-gate and close-gate conformations leads to a dynamic regulation of the 20S proteasome proteolysis activity. Component of the proteasome core, a large protease complex with broad specificity involved in protein degradation. In Methanococcus maripaludis (strain C6 / ATCC BAA-1332), this protein is Proteasome subunit beta.